A 225-amino-acid chain; its full sequence is Platelet-activating factor acetylhydrolase IB subunit beta homolog (225 aa).

It belongs to the 'GDSL' lipolytic enzyme family. Platelet-activating factor acetylhydrolase IB beta/gamma subunits subfamily. In terms of assembly, does not interact with Lis-1.

The sequence is that of Platelet-activating factor acetylhydrolase IB subunit beta homolog (Paf-AHalpha) from Drosophila melanogaster (Fruit fly).